A 415-amino-acid chain; its full sequence is N-succinylarginine dihydrolase (415 aa).

Substrate contacts are provided by residues 18–27, asparagine 100, and 127–128; these read AGLSRGNIAS and HR. Glutamate 161 is a catalytic residue. Arginine 193 contacts substrate. Histidine 229 is a catalytic residue. Positions 231 and 340 each coordinate substrate. The active-site Nucleophile is cysteine 346.

It belongs to the succinylarginine dihydrolase family. Homodimer.

It catalyses the reaction N(2)-succinyl-L-arginine + 2 H2O + 2 H(+) = N(2)-succinyl-L-ornithine + 2 NH4(+) + CO2. It participates in amino-acid degradation; L-arginine degradation via AST pathway; L-glutamate and succinate from L-arginine: step 2/5. Its function is as follows. Catalyzes the hydrolysis of N(2)-succinylarginine into N(2)-succinylornithine, ammonia and CO(2). The chain is N-succinylarginine dihydrolase from Sphingopyxis alaskensis (strain DSM 13593 / LMG 18877 / RB2256) (Sphingomonas alaskensis).